Consider the following 596-residue polypeptide: NADH-quinone oxidoreductase subunit C/D (596 aa).

The interval 1 to 186 (MVDIMCNDST…NPFILTKQKE (186 aa)) is NADH dehydrogenase I subunit C. The tract at residues 210–596 (NFMFLNLGPN…IDFVMSDVDR (387 aa)) is NADH dehydrogenase I subunit D.

In the N-terminal section; belongs to the complex I 30 kDa subunit family. The protein in the C-terminal section; belongs to the complex I 49 kDa subunit family. As to quaternary structure, NDH-1 is composed of 13 different subunits. Subunits NuoB, CD, E, F, and G constitute the peripheral sector of the complex.

It localises to the cell inner membrane. The enzyme catalyses a quinone + NADH + 5 H(+)(in) = a quinol + NAD(+) + 4 H(+)(out). NDH-1 shuttles electrons from NADH, via FMN and iron-sulfur (Fe-S) centers, to quinones in the respiratory chain. The immediate electron acceptor for the enzyme in this species is believed to be ubiquinone. Couples the redox reaction to proton translocation (for every two electrons transferred, four hydrogen ions are translocated across the cytoplasmic membrane), and thus conserves the redox energy in a proton gradient. This Blochmanniella pennsylvanica (strain BPEN) protein is NADH-quinone oxidoreductase subunit C/D.